Consider the following 205-residue polypeptide: MADFTNNALKKFKLVFLGEQSVGKTSIITRFMYDSFDNTYQATIGIDFLSKTMYLEDRTIRLQLWDTAGQERFRSLIPSYIRDSSVAVVVYDITNANSFHQTTKWVDDVRNERGCDVIIVLVGNKTDLADKRQVSTEDGEKKARDLNVMFIETSAKAGYNVKQLFRKIATALPGIVQEETPEQPNIVIMNPPKDAEESQGRQCPC.

Residues 18 to 25 (GEQSVGKT), Thr-43, 66 to 70 (DTAGQ), and 124 to 127 (NKTD) contribute to the GTP site. 2 S-geranylgeranyl cysteine lipidation sites follow: Cys-203 and Cys-205. The residue at position 205 (Cys-205) is a Cysteine methyl ester.

Belongs to the small GTPase superfamily. Rab family. As to quaternary structure, interacts with GARP complex component vps-52. In terms of tissue distribution, highly expressed in body wall muscle, intestine, somatic gonad, distal tip cells, vulva, and neurons including AVB, AVD, RIG, and PVC (at protein level). Not expressed in AVA and RMDV neurons.

The protein localises to the cell membrane. It is found in the cell projection. It localises to the dendrite. The protein resides in the perikaryon. Its subcellular location is the golgi apparatus. The protein localises to the cytoplasmic vesicle. It is found in the secretory vesicle. In terms of biological role, the small GTPases Rab are key regulators of intracellular membrane trafficking, from the formation of transport vesicles to their fusion with membranes. Rabs cycle between an inactive GDP-bound form and an active GTP-bound form that is able to recruit to membranes different set of downstream effectors directly responsible for vesicle formation, movement, tethering and fusion. In its active GTP-bound form, acts redundantly with rab-6.2 (in its active GTP-bound form) to positively regulate the retrograde trafficking of cargo molecules from endosomes to Golgi structures. Required for the retrograde trafficking of glr-1, a subunit of AMPA-type glutamate receptors (AMPRs), out of early endosomes and into the Golgi compartment in neurons. Together with rab-6.2, promotes the retrograde trafficking of mig-14 from endosomes to Golgi structures in the intestine. In oocytes, in its active GTP-bound form, involved in the membrane fusion and exocytosis of secretory vesicles (cortical granules) to play a role in the remodeling of the embryo surface following fertilization. Recruits sep-1 to cortical granules (derived from the Golgi complex) for exocytosis during the oocyte-to-embryo transition. Required for seam cell division and alae formation. Promotes spontaneous reversals in locomotion. This is Ras-related protein rab-6.1 from Caenorhabditis elegans.